The following is a 719-amino-acid chain: Plasmin and fibronectin-binding protein A (719 aa).

The N-terminal stretch at 1–45 is a signal peptide; that stretch reads MLKIVKKLEVLMKYFVPNEVFSIRKLKVGTCSVLLAISILGSQGI. 2 disordered regions span residues 56–76 and 109–128; these read PMATKESSNAITNDLDNSPTV and IRSNSQLDNRTVESTVTSTN. 5 PbH1 repeats span residues 287–310, 362–384, 397–419, 497–523, and 525–546; these read SNNVTIKNVTFKDSYQGHAIQIAG, SENVTIQNSYFGKSDKSGELVTA, PSNIKILNNHFDNMMYAGVRFTG, VSDITVTKNVINNNSKETEQPNIELLR, and SDNLVVSENSIFGGKEGIVIED. A coiled-coil region spans residues 601 to 658; it reads NNLSDKNEKEKNKEEKQSNSNNVIDSNQKNGEFNSSKDNRQMNDKIDNKQDNKTEEVN. The span at 606-617 shows a compositional bias: basic and acidic residues; sequence KNEKEKNKEEKQ. The disordered stretch occupies residues 606–655; the sequence is KNEKEKNKEEKQSNSNNVIDSNQKNGEFNSSKDNRQMNDKIDNKQDNKTE. The span at 623–634 shows a compositional bias: polar residues; it reads VIDSNQKNGEFN. Basic and acidic residues predominate over residues 635–655; sequence SSKDNRQMNDKIDNKQDNKTE. Positions 685–689 match the LPXTG sorting signal motif; it reads LPKTG. Pentaglycyl murein peptidoglycan amidated threonine is present on Thr-688. A propeptide spans 689–719 (removed by sortase); sequence GSNKIMELFLTVTGIGLLLTLKGLKYYGKDK.

The protein resides in the secreted. The protein localises to the cell wall. Its function is as follows. Acts as a fibronectin-dependent adhesin and invasin. Binds host (in this case human) fibronectin, plasmin, plasminogen, and human serum albumin. Where the bacteria adhere to human cells there is major recruitment of microvilli which seem to fuse to cover the streptococcal chains. Antibodies to this protein reduce bacterial growth in human blood. In Streptococcus pneumoniae (strain ATCC BAA-255 / R6), this protein is Plasmin and fibronectin-binding protein A (pfbA).